The primary structure comprises 450 residues: Exodeoxyribonuclease 7 large subunit (450 aa).

The protein belongs to the XseA family. In terms of assembly, heterooligomer composed of large and small subunits.

The protein localises to the cytoplasm. The enzyme catalyses Exonucleolytic cleavage in either 5'- to 3'- or 3'- to 5'-direction to yield nucleoside 5'-phosphates.. Bidirectionally degrades single-stranded DNA into large acid-insoluble oligonucleotides, which are then degraded further into small acid-soluble oligonucleotides. The protein is Exodeoxyribonuclease 7 large subunit of Shewanella frigidimarina (strain NCIMB 400).